The chain runs to 158 residues: Protein OPG060 (158 aa).

It belongs to the orthopoxvirus OPG058 family.

The chain is Protein OPG060 (OPG060) from Homo sapiens (Human).